The primary structure comprises 176 residues: Corrinoid adenosyltransferase (176 aa).

Residues 6 to 14 (TRTGDNGTT), K24, 131 to 136 (RRLERI), and N155 each bind ATP.

This sequence belongs to the Cob(I)alamin adenosyltransferase family.

The protein resides in the cytoplasm. It carries out the reaction 2 cob(II)yrinate a,c diamide + reduced [electron-transfer flavoprotein] + 2 ATP = 2 adenosylcob(III)yrinate a,c-diamide + 2 triphosphate + oxidized [electron-transfer flavoprotein] + 3 H(+). The enzyme catalyses 2 cob(II)alamin + reduced [electron-transfer flavoprotein] + 2 ATP = 2 adenosylcob(III)alamin + 2 triphosphate + oxidized [electron-transfer flavoprotein] + 3 H(+). It functions in the pathway cofactor biosynthesis; adenosylcobalamin biosynthesis; adenosylcobalamin from cob(II)yrinate a,c-diamide: step 2/7. The chain is Corrinoid adenosyltransferase from Citrobacter freundii.